Consider the following 216-residue polypeptide: GTP-binding nuclear protein Ran, testis-specific isoform (216 aa).

Position 2 is an N-acetylalanine (Ala2). Residues 7–171 (PQVQFKVVLV…FWLARKLIGD (165 aa)) enclose the Small GTPase Ran-type domain. 17–24 (GDGGTGKT) lines the GTP pocket. Position 24 is a phosphothreonine (Thr24). The segment at 37 to 45 (KEYVATLGV) is switch-I. Residue Lys60 is modified to N6-acetyllysine. 65–69 (DTAGQ) lines the GTP pocket. The switch-II stretch occupies residues 68 to 84 (GQEKFGGLRDGYYIQAQ). At Lys71 the chain carries N6-acetyllysine; alternate. Lys71 is covalently cross-linked (Glycyl lysine isopeptide (Lys-Gly) (interchain with G-Cter in SUMO2); alternate). A Glycyl lysine isopeptide (Lys-Gly) (interchain with G-Cter in ubiquitin); alternate cross-link involves residue Lys71. Lys99 carries the N6-acetyllysine modification. Residue 122–125 (NKVD) coordinates GTP. Lys134 bears the N6-acetyllysine mark. Lys159 carries the N6-acetyllysine; alternate modification. The residue at position 159 (Lys159) is an N6-succinyllysine; alternate.

It belongs to the small GTPase superfamily. Ran family. In terms of tissue distribution, testis specific.

Its subcellular location is the nucleus. The catalysed reaction is GTP + H2O = GDP + phosphate + H(+). In terms of biological role, GTP-binding protein involved in nucleocytoplasmic transport. Required for the import of protein into the nucleus and also for RNA export. Involved in chromatin condensation and control of cell cycle. This chain is GTP-binding nuclear protein Ran, testis-specific isoform (Rasl2-9), found in Mus musculus (Mouse).